Here is a 243-residue protein sequence, read N- to C-terminus: MALKPIIVIPARIGSTRLPQKALAEIAGKPMIVHVAEQAKKAAFGRTIVATDHHDIAKAVIAYGHECIMTSSHHESGSDRIYEALNHIDPERCYNTILNVQGDLPTITPHEIISALRPLKNSLTDIATLGAKIVEKDEKTDPNVVKIIGTPLSQNRLRALYFTRATAPYGDGPLYHHIGIYAYRREALEKFVALKPSTLEQREKLEQLRALEHNMRIDVEIIDTIPLGVDTQYDLERVRKILA.

The protein belongs to the KdsB family.

The protein resides in the cytoplasm. It carries out the reaction 3-deoxy-alpha-D-manno-oct-2-ulosonate + CTP = CMP-3-deoxy-beta-D-manno-octulosonate + diphosphate. It participates in nucleotide-sugar biosynthesis; CMP-3-deoxy-D-manno-octulosonate biosynthesis; CMP-3-deoxy-D-manno-octulosonate from 3-deoxy-D-manno-octulosonate and CTP: step 1/1. Its pathway is bacterial outer membrane biogenesis; lipopolysaccharide biosynthesis. Its function is as follows. Activates KDO (a required 8-carbon sugar) for incorporation into bacterial lipopolysaccharide in Gram-negative bacteria. The sequence is that of 3-deoxy-manno-octulosonate cytidylyltransferase from Bartonella quintana (strain Toulouse) (Rochalimaea quintana).